A 680-amino-acid polypeptide reads, in one-letter code: E3 ubiquitin-protein ligase Midline-1 (680 aa).

The segment at 10–60 (CPICLELFEDPLLLPCAHSLCFNCAHRILVSHCATNEPVESINAFQCPTCR) adopts an RING-type zinc-finger fold. Residues Ser-92 and Ser-96 each carry the phosphoserine modification. 2 consecutive B box-type zinc fingers follow at residues 116–165 (KVLC…IEPI) and 172–212 (GLMC…VAAL). Residues Cys-119, Cys-122, Cys-134, Cys-137, Cys-142, Cys-145, His-150, His-159, Cys-175, His-178, Cys-198, and His-204 each contribute to the Zn(2+) site. A coiled-coil region spans residues 205–264 (RDHQVAALSERYDKLKQNLESNLTNLIKRNTELETLLAKLIQTCQHVEVNASRQEAKLTE). The COS domain maps to 320–379 (LKENDHARFLQTAKNITERVSMATASSQVLIPEINLNDTFDTFALDFSREKKLLECLDYL). The region spanning 384-494 (PPAIREELCT…RSSEPGKLKT (111 aa)) is the Fibronectin type-III domain. A compositionally biased stretch (polar residues) spans 484–498 (SRSSEPGKLKTNSQP). 2 disordered regions span residues 484–503 (SRSS…RLDP) and 516–535 (NLTV…PERF). One can recognise a B30.2/SPRY domain in the interval 495-672 (NSQPFRLDPK…IVTGLPIPDH (178 aa)). A compositionally biased stretch (basic and acidic residues) spans 516–533 (NLTVERDESSSKKSHAPE). The residue at position 524 (Ser-524) is a Phosphoserine.

This sequence belongs to the TRIM/RBCC family. As to quaternary structure, homodimer or heterodimer with MID2. Interacts with IGBP1. Post-translationally, phosphorylated. As to expression, ubiquitously expressed in fetus and adult. At 9 dpc-10.5 dpc, highest expression found in frontonasal processes, branchial arches and CNS. From 12.5 dpc to 16.5 dpc, high levels found in rostral part of CNS. At 14.5 dpc, begins to be highly expressed in kidney and lung. At 16.5 dpc, highly expressed in the mucosa of the hindgut and cutaneous region of the stomach.

Its subcellular location is the cytoplasm. The protein resides in the cytoskeleton. It catalyses the reaction S-ubiquitinyl-[E2 ubiquitin-conjugating enzyme]-L-cysteine + [acceptor protein]-L-lysine = [E2 ubiquitin-conjugating enzyme]-L-cysteine + N(6)-ubiquitinyl-[acceptor protein]-L-lysine.. Has E3 ubiquitin ligase activity towards IGBP1, promoting its monoubiquitination, which results in deprotection of the catalytic subunit of protein phosphatase PP2A, and its subsequent degradation by polyubiquitination. The chain is E3 ubiquitin-protein ligase Midline-1 (Mid1) from Mus musculus (Mouse).